A 331-amino-acid chain; its full sequence is Ribosomal RNA small subunit methyltransferase H (331 aa).

Residues 48-50 (GGH), Asp67, Asp115, and Gln122 contribute to the S-adenosyl-L-methionine site. Positions 297-331 (RGTEKPTEEEISENRRASSAKVRAVEKIRTSRTTA) are disordered. The span at 298–312 (GTEKPTEEEISENRR) shows a compositional bias: basic and acidic residues.

It belongs to the methyltransferase superfamily. RsmH family.

It localises to the cytoplasm. It carries out the reaction cytidine(1402) in 16S rRNA + S-adenosyl-L-methionine = N(4)-methylcytidine(1402) in 16S rRNA + S-adenosyl-L-homocysteine + H(+). Its function is as follows. Specifically methylates the N4 position of cytidine in position 1402 (C1402) of 16S rRNA. This Micrococcus luteus (strain ATCC 4698 / DSM 20030 / JCM 1464 / CCM 169 / CCUG 5858 / IAM 1056 / NBRC 3333 / NCIMB 9278 / NCTC 2665 / VKM Ac-2230) (Micrococcus lysodeikticus) protein is Ribosomal RNA small subunit methyltransferase H.